Reading from the N-terminus, the 408-residue chain is Imidazolonepropionase (408 aa).

Fe(3+) contacts are provided by histidine 73 and histidine 75. The Zn(2+) site is built by histidine 73 and histidine 75. Residues arginine 82, tyrosine 145, and histidine 178 each contribute to the 4-imidazolone-5-propanoate site. Tyrosine 145 is a binding site for N-formimidoyl-L-glutamate. Residue histidine 243 coordinates Fe(3+). A Zn(2+)-binding site is contributed by histidine 243. Glutamine 246 provides a ligand contact to 4-imidazolone-5-propanoate. Aspartate 318 is a binding site for Fe(3+). Aspartate 318 contacts Zn(2+). Residues asparagine 320 and glycine 322 each coordinate N-formimidoyl-L-glutamate. Position 323 (serine 323) interacts with 4-imidazolone-5-propanoate.

This sequence belongs to the metallo-dependent hydrolases superfamily. HutI family. The cofactor is Zn(2+). Fe(3+) is required as a cofactor.

The protein resides in the cytoplasm. It carries out the reaction 4-imidazolone-5-propanoate + H2O = N-formimidoyl-L-glutamate. It participates in amino-acid degradation; L-histidine degradation into L-glutamate; N-formimidoyl-L-glutamate from L-histidine: step 3/3. In terms of biological role, catalyzes the hydrolytic cleavage of the carbon-nitrogen bond in imidazolone-5-propanoate to yield N-formimidoyl-L-glutamate. It is the third step in the universal histidine degradation pathway. This chain is Imidazolonepropionase, found in Shewanella loihica (strain ATCC BAA-1088 / PV-4).